Consider the following 313-residue polypeptide: Methionyl-tRNA formyltransferase (313 aa).

(6S)-5,6,7,8-tetrahydrofolate is bound at residue 112–115; it reads SLLP.

It belongs to the Fmt family.

The enzyme catalyses L-methionyl-tRNA(fMet) + (6R)-10-formyltetrahydrofolate = N-formyl-L-methionyl-tRNA(fMet) + (6S)-5,6,7,8-tetrahydrofolate + H(+). Its function is as follows. Attaches a formyl group to the free amino group of methionyl-tRNA(fMet). The formyl group appears to play a dual role in the initiator identity of N-formylmethionyl-tRNA by promoting its recognition by IF2 and preventing the misappropriation of this tRNA by the elongation apparatus. The polypeptide is Methionyl-tRNA formyltransferase (Geotalea uraniireducens (strain Rf4) (Geobacter uraniireducens)).